The following is a 257-amino-acid chain: Snake venom serine protease CL5 (257 aa).

Residues 1–18 (MVLIRVLANLLILQLSYA) form the signal peptide. The propeptide occupies 19–24 (QRSSEL). The Peptidase S1 domain occupies 25-248 (VIGGDECNIN…HLDWIQSIIA (224 aa)). 5 cysteine pairs are disulfide-bonded: Cys-31-Cys-162, Cys-49-Cys-65, Cys-141-Cys-209, Cys-173-Cys-188, and Cys-199-Cys-224. Residue His-64 is the Charge relay system of the active site. N-linked (GlcNAc...) asparagine glycosylation is found at Asn-78 and Asn-102. Asp-109 functions as the Charge relay system in the catalytic mechanism. Asn-153 and Asn-169 each carry an N-linked (GlcNAc...) asparagine glycan. Ser-203 serves as the catalytic Charge relay system. Asn-250 is a glycosylation site (N-linked (GlcNAc...) asparagine).

The protein belongs to the peptidase S1 family. Snake venom subfamily. In terms of assembly, monomer. As to expression, expressed by the venom gland.

It localises to the secreted. In terms of biological role, snake venom serine protease that may act in the hemostasis system of the prey. This chain is Snake venom serine protease CL5, found in Trimeresurus stejnegeri (Chinese green tree viper).